The chain runs to 120 residues: Large ribosomal subunit protein uL18c (120 aa).

It belongs to the universal ribosomal protein uL18 family. In terms of assembly, part of the 50S ribosomal subunit; contacts the 5S rRNA.

It localises to the plastid. The protein resides in the chloroplast. In terms of biological role, binds 5S rRNA, forms part of the central protuberance of the 50S subunit. The polypeptide is Large ribosomal subunit protein uL18c (rpl18) (Porphyra purpurea (Red seaweed)).